A 454-amino-acid chain; its full sequence is tRNA modification GTPase MnmE (454 aa).

The (6S)-5-formyl-5,6,7,8-tetrahydrofolate site is built by arginine 23, glutamate 80, and lysine 120. The TrmE-type G domain occupies 216–377 (GMKVVIAGRP…LRNHLKQSMG (162 aa)). Asparagine 226 lines the K(+) pocket. Residues 226 to 231 (NAGKSS), 245 to 251 (TDIAGTT), 270 to 273 (DTAG), 335 to 338 (NKAD), and 358 to 360 (SAR) contribute to the GTP site. Serine 230 is a binding site for Mg(2+). K(+) is bound by residues threonine 245, isoleucine 247, and threonine 250. Residue threonine 251 coordinates Mg(2+). Lysine 454 contacts (6S)-5-formyl-5,6,7,8-tetrahydrofolate.

Belongs to the TRAFAC class TrmE-Era-EngA-EngB-Septin-like GTPase superfamily. TrmE GTPase family. As to quaternary structure, homodimer. Heterotetramer of two MnmE and two MnmG subunits. Requires K(+) as cofactor.

Its subcellular location is the cytoplasm. Exhibits a very high intrinsic GTPase hydrolysis rate. Involved in the addition of a carboxymethylaminomethyl (cmnm) group at the wobble position (U34) of certain tRNAs, forming tRNA-cmnm(5)s(2)U34. This is tRNA modification GTPase MnmE from Escherichia coli O6:K15:H31 (strain 536 / UPEC).